A 348-amino-acid chain; its full sequence is uncharacterized protein (348 aa).

6 WD repeats span residues 59–98 (GFQG…VVYS), 142–182 (GHTD…LIQT), 185–226 (DNLG…LLGT), 229–267 (QQPG…ELFS), 270–309 (GPSL…QVTT), and 312–347 (GHQG…SALA).

This is an uncharacterized protein from Synechocystis sp. (strain ATCC 27184 / PCC 6803 / Kazusa).